A 418-amino-acid chain; its full sequence is STAM-binding protein-like A (418 aa).

Residues 199–218 (PDVHGPPQASLSPQTPPAGA) form a disordered region. The MPN domain occupies 251 to 382 (LFVPAELCQR…LTDYGMDDVG (132 aa)). H329, H331, D342, H344, C384, H390, and H392 together coordinate Zn(2+). Residues 329–342 (HTHPTQTAFLSSVD) carry the JAMM motif motif.

Belongs to the peptidase M67C family. Zn(2+) is required as a cofactor.

Its function is as follows. Zinc metalloprotease that specifically cleaves 'Lys-63'-linked polyubiquitin chains. Does not cleave 'Lys-48'-linked polyubiquitin chains. Functions at the endosome and is able to oppose the ubiquitin-dependent sorting of receptors to lysosomes. This is STAM-binding protein-like A (stambpa) from Danio rerio (Zebrafish).